A 234-amino-acid polypeptide reads, in one-letter code: Protein SSP120 (234 aa).

A signal peptide spans Met1 to Ala22. EF-hand domains follow at residues Leu52 to Glu87 and Met108 to Phe143. The residue at position 212 (Thr212) is a Phosphothreonine.

The polypeptide is Protein SSP120 (SSP120) (Saccharomyces cerevisiae (strain ATCC 204508 / S288c) (Baker's yeast)).